The sequence spans 216 residues: Pyrophosphatase PpaX (216 aa).

The Nucleophile role is filled by aspartate 9.

This sequence belongs to the HAD-like hydrolase superfamily. PpaX family. The cofactor is Mg(2+).

The catalysed reaction is diphosphate + H2O = 2 phosphate + H(+). Functionally, hydrolyzes pyrophosphate formed during P-Ser-HPr dephosphorylation by HPrK/P. Might play a role in controlling the intracellular pyrophosphate pool. In Bacillus cereus (strain G9842), this protein is Pyrophosphatase PpaX.